Consider the following 405-residue polypeptide: Phosphopentomutase (405 aa).

The Mn(2+) site is built by D10, D303, H308, D344, H345, and H356.

It belongs to the phosphopentomutase family. Requires Mn(2+) as cofactor.

It is found in the cytoplasm. It catalyses the reaction 2-deoxy-alpha-D-ribose 1-phosphate = 2-deoxy-D-ribose 5-phosphate. It carries out the reaction alpha-D-ribose 1-phosphate = D-ribose 5-phosphate. Its pathway is carbohydrate degradation; 2-deoxy-D-ribose 1-phosphate degradation; D-glyceraldehyde 3-phosphate and acetaldehyde from 2-deoxy-alpha-D-ribose 1-phosphate: step 1/2. In terms of biological role, isomerase that catalyzes the conversion of deoxy-ribose 1-phosphate (dRib-1-P) and ribose 1-phosphate (Rib-1-P) to deoxy-ribose 5-phosphate (dRib-5-P) and ribose 5-phosphate (Rib-5-P), respectively. In Shewanella pealeana (strain ATCC 700345 / ANG-SQ1), this protein is Phosphopentomutase.